The sequence spans 278 residues: uncharacterized protein (278 aa).

Belongs to the manganese catalase family.

This is an uncharacterized protein from Bacillus subtilis (strain 168).